We begin with the raw amino-acid sequence, 147 residues long: 3-hydroxyacyl-[acyl-carrier-protein] dehydratase FabZ (147 aa).

H49 is a catalytic residue.

It belongs to the thioester dehydratase family. FabZ subfamily.

It localises to the cytoplasm. The catalysed reaction is a (3R)-hydroxyacyl-[ACP] = a (2E)-enoyl-[ACP] + H2O. In terms of biological role, involved in unsaturated fatty acids biosynthesis. Catalyzes the dehydration of short chain beta-hydroxyacyl-ACPs and long chain saturated and unsaturated beta-hydroxyacyl-ACPs. This is 3-hydroxyacyl-[acyl-carrier-protein] dehydratase FabZ from Syntrophotalea carbinolica (strain DSM 2380 / NBRC 103641 / GraBd1) (Pelobacter carbinolicus).